The following is a 420-amino-acid chain: Phosphoglycerate kinase, cytosolic (420 aa).

Residues Val23, Asp24, Phe25, Asn26, Arg39, Ser61, His62, Gly64, Arg65, Arg135, His171, and Arg172 each coordinate (2R)-3-phosphoglycerate. ADP is bound by residues Gly217 and Ala218. CDP is bound at residue Gly217. Residues Ala218 and Lys219 each contribute to the AMP site. Ala218 contributes to the ATP binding site. Ala218 serves as a coordination point for Mg(2+). (2R)-3-phosphoglycerate is bound at residue Lys219. Asp222 provides a ligand contact to CDP. Asp222 is a Mg(2+) binding site. Positions 223 and 241 each coordinate ADP. Lys223 contributes to the AMP binding site. Lys223 provides a ligand contact to ATP. Gly241 contacts CDP. Positions 242 and 314 each coordinate AMP. The ATP site is built by Ala242 and Ala314. Residues Ala314 and Asn338 each coordinate ADP. Residues Gly339 and Phe344 each coordinate CDP. ADP is bound by residues Phe344, Glu345, Glu377, and Ser378. Glu345 serves as a coordination point for AMP. Residues Glu345, Glu377, and Ser378 each coordinate ATP. A Mg(2+)-binding site is contributed by Glu377.

Belongs to the phosphoglycerate kinase family. In terms of assembly, monomer. The cofactor is Mg(2+).

Its subcellular location is the cytoplasm. It carries out the reaction (2R)-3-phosphoglycerate + ATP = (2R)-3-phospho-glyceroyl phosphate + ADP. It functions in the pathway carbohydrate degradation; glycolysis; pyruvate from D-glyceraldehyde 3-phosphate: step 2/5. This chain is Phosphoglycerate kinase, cytosolic, found in Trypanosoma brucei brucei.